A 90-amino-acid chain; its full sequence is Beta-microseminoprotein (90 aa).

5 disulfides stabilise this stretch: Cys-2-Cys-16, Cys-34-Cys-70, Cys-37-Cys-46, Cys-39-Cys-47, and Cys-61-Cys-84. Valine amide is present on Val-90.

It belongs to the beta-microseminoprotein family.

Its subcellular location is the secreted. This Struthio camelus (Common ostrich) protein is Beta-microseminoprotein (MSMB).